The sequence spans 100 residues: NADH-quinone oxidoreductase subunit K (100 aa).

3 helical membrane-spanning segments follow: residues 4 to 24 (LNYG…SLLI), 29 to 49 (IFIL…FILI), and 60 to 80 (VLYI…LAIF).

The protein belongs to the complex I subunit 4L family. As to quaternary structure, NDH-1 is composed of 13 different subunits. Subunits NuoA, H, J, K, L, M, N constitute the membrane sector of the complex.

It localises to the cell membrane. The enzyme catalyses a quinone + NADH + 5 H(+)(in) = a quinol + NAD(+) + 4 H(+)(out). In terms of biological role, NDH-1 shuttles electrons from NADH, via FMN and iron-sulfur (Fe-S) centers, to quinones in the respiratory chain. The immediate electron acceptor for the enzyme in this species is believed to be ubiquinone. Couples the redox reaction to proton translocation (for every two electrons transferred, four hydrogen ions are translocated across the cytoplasmic membrane), and thus conserves the redox energy in a proton gradient. The chain is NADH-quinone oxidoreductase subunit K from Buchnera aphidicola subsp. Cinara cedri (strain Cc).